A 166-amino-acid polypeptide reads, in one-letter code: Cytochrome c-type biogenesis protein CcmE (166 aa).

Residues 1 to 7 (MTRKQKR) lie on the Cytoplasmic side of the membrane. The helical; Signal-anchor for type II membrane protein transmembrane segment at 8–28 (LALIASGAVVVSLAVGLVMFA) threads the bilayer. At 29–166 (LRDNIVFFYS…QTAPQGAQAY (138 aa)) the chain is on the periplasmic side. His122 and Tyr126 together coordinate heme. A disordered region spans residues 139-166 (GVWQEEGKSEGKPSAIPAQTAPQGAQAY).

The protein belongs to the CcmE/CycJ family.

The protein localises to the cell inner membrane. Heme chaperone required for the biogenesis of c-type cytochromes. Transiently binds heme delivered by CcmC and transfers the heme to apo-cytochromes in a process facilitated by CcmF and CcmH. In Methylocella silvestris (strain DSM 15510 / CIP 108128 / LMG 27833 / NCIMB 13906 / BL2), this protein is Cytochrome c-type biogenesis protein CcmE.